The primary structure comprises 114 residues: Hydrogenase maturation factor HypA (114 aa).

His-2 is a Ni(2+) binding site. Cys-73, Cys-76, Cys-89, and Cys-92 together coordinate Zn(2+).

This sequence belongs to the HypA/HybF family.

In terms of biological role, involved in the maturation of [NiFe] hydrogenases. Required for nickel insertion into the metal center of the hydrogenase. This chain is Hydrogenase maturation factor HypA, found in Desulfitobacterium hafniense (strain DSM 10664 / DCB-2).